Here is a 110-residue protein sequence, read N- to C-terminus: Ribonuclease P protein component 1 (110 aa).

The protein belongs to the eukaryotic/archaeal RNase P protein component 1 family. Consists of a catalytic RNA component and at least 4-5 protein subunits.

It is found in the cytoplasm. It carries out the reaction Endonucleolytic cleavage of RNA, removing 5'-extranucleotides from tRNA precursor.. Its function is as follows. Part of ribonuclease P, a protein complex that generates mature tRNA molecules by cleaving their 5'-ends. The sequence is that of Ribonuclease P protein component 1 from Methanosarcina mazei (strain ATCC BAA-159 / DSM 3647 / Goe1 / Go1 / JCM 11833 / OCM 88) (Methanosarcina frisia).